A 327-amino-acid chain; its full sequence is Toluene-4-monooxygenase system, hydroxylase component subunit beta (327 aa).

Belongs to the TmoE/XamoE family. As to quaternary structure, the alkene monooxygenase multicomponent enzyme system is composed of an electron transfer component and a monooxygenase component interacting with the effector protein TmoD. The electron transfer component is composed of a ferredoxin reductase (TmoF) and a ferredoxin (TmoC), and the monooxygenase component is formed by a heterohexamer (dimer of heterotrimers) of two alpha subunits (TmoA), two beta subunits (TmoE) and two gamma subunits (TmoB).

The catalysed reaction is toluene + NADH + O2 + H(+) = 4-methylphenol + NAD(+) + H2O. Its pathway is xenobiotic degradation; toluene degradation. Inhibited by Zn(2+) and Cu(2+). Component of the toluene-4-monooxygenase multicomponent enzyme system which catalyzes the O2- and NADH-dependent hydroxylation of toluene to form p-cresol. Also able to convert benzene to phenol, catechol, and 1,2,3-trihydroxybenzene by successive hydroxylations. This is Toluene-4-monooxygenase system, hydroxylase component subunit beta from Ectopseudomonas mendocina (Pseudomonas mendocina).